A 56-amino-acid polypeptide reads, in one-letter code: MSKGTSSMGKRQKRTHAKCRRCGSVSFNVHTKQCTSCGFGKTSRMRTYKWQAKCKY.

Zn(2+)-binding residues include C19, C22, C34, and C37. Residues 19–37 (CRRCGSVSFNVHTKQCTSC) form a C4-type zinc finger.

Belongs to the eukaryotic ribosomal protein eL37 family. It depends on Zn(2+) as a cofactor.

In terms of biological role, binds to the 23S rRNA. This chain is Large ribosomal subunit protein eL37 (rpl37e), found in Methanosarcina acetivorans (strain ATCC 35395 / DSM 2834 / JCM 12185 / C2A).